Here is a 219-residue protein sequence, read N- to C-terminus: MFITFEGIDGCGKTTQSILLAKYMSDLYGEDNVVLTREPGGTSFNELLRSVFLSVSDYKVDKLTELFLFLAMRRESFVKVVESALRANKIVISDRCVDSTVAYQGYGCGIDLDLIYKLNSLVMGIVPDMTFIIDIDIEKALSRATRNGYESNSMDFYHKVRKGFQRIAEEEKHRCVLLRCDDYEENGICDVYSVHNKIVGLLQGVLHNKMDAASSSVKV.

7 to 14 contributes to the ATP binding site; the sequence is GIDGCGKT.

This sequence belongs to the thymidylate kinase family.

It catalyses the reaction dTMP + ATP = dTDP + ADP. In terms of biological role, phosphorylation of dTMP to form dTDP in both de novo and salvage pathways of dTTP synthesis. The protein is Thymidylate kinase of Anaplasma phagocytophilum (strain HZ).